The chain runs to 628 residues: Glutamyl-tRNA(Gln) amidotransferase subunit E (628 aa).

This sequence belongs to the GatB/GatE family. GatE subfamily. Heterodimer of GatD and GatE.

It catalyses the reaction L-glutamyl-tRNA(Gln) + L-glutamine + ATP + H2O = L-glutaminyl-tRNA(Gln) + L-glutamate + ADP + phosphate + H(+). Allows the formation of correctly charged Gln-tRNA(Gln) through the transamidation of misacylated Glu-tRNA(Gln) in organisms which lack glutaminyl-tRNA synthetase. The reaction takes place in the presence of glutamine and ATP through an activated gamma-phospho-Glu-tRNA(Gln). The GatDE system is specific for glutamate and does not act on aspartate. The sequence is that of Glutamyl-tRNA(Gln) amidotransferase subunit E from Pyrococcus furiosus (strain ATCC 43587 / DSM 3638 / JCM 8422 / Vc1).